Here is a 233-residue protein sequence, read N- to C-terminus: Protein Mis18-alpha (233 aa).

3 positions are modified to phosphoserine: S36, S39, and S40. A Mis18 domain is found at 80–178; sequence PLVFLCSGCR…SVEAIESYVL (99 aa). 4 residues coordinate Zn(2+): C85, C88, C141, and C144. K162 is covalently cross-linked (Glycyl lysine isopeptide (Lys-Gly) (interchain with G-Cter in SUMO2)). The residue at position 233 (S233) is a Phosphoserine.

This sequence belongs to the mis18 family. As to quaternary structure, homodimer, and heterodimer with OIP5/MIS18B. Identified in a complex containing MIS18A, OIP5/MIS18B, MIS18BP1, RBBP7 and RBBP4. Detected in testis.

The protein resides in the nucleus. The protein localises to the chromosome. It is found in the centromere. Required for recruitment of CENPA to centromeres and normal chromosome segregation during mitosis. In Homo sapiens (Human), this protein is Protein Mis18-alpha (MIS18A).